The sequence spans 201 residues: Ubiquinone biosynthesis accessory factor UbiJ (201 aa).

The SCP2 domain maps to 15–112; sequence LNTFLYRSPA…QVVQNFVALA (98 aa).

The protein belongs to the UbiJ family. In terms of assembly, component of the Ubi complex metabolon, which regroups five ubiquinone biosynthesis proteins (UbiE, UbiF, UbiG, UbiH and UbiI) and two accessory factors (UbiK and the lipid-binding protein UbiJ). Interacts with UbiK and forms a complex composed of 2 UbiK subunits and 1 UbiJ subunit. The UbiK-UbiJ complex interacts with palmitoleic acid.

Its subcellular location is the cytoplasm. The protein operates within cofactor biosynthesis; ubiquinone biosynthesis. In terms of biological role, required for ubiquinone (coenzyme Q) biosynthesis under aerobic conditions. Binds hydrophobic ubiquinone biosynthetic intermediates via its SCP2 domain and is essential for the stability of the Ubi complex. May constitute a docking platform where Ubi enzymes assemble and access their SCP2-bound polyprenyl substrates. The sequence is that of Ubiquinone biosynthesis accessory factor UbiJ from Escherichia coli (strain K12).